We begin with the raw amino-acid sequence, 285 residues long: Energy-coupling factor transporter ATP-binding protein EcfA2 (285 aa).

The ABC transporter domain maps to 3 to 245; the sequence is IKFKKVDYIY…RKWLKKHNLS (243 aa). 40–47 lines the ATP pocket; the sequence is GHTGSGKS.

It belongs to the ABC transporter superfamily. Energy-coupling factor EcfA family. As to quaternary structure, forms a stable energy-coupling factor (ECF) transporter complex composed of 2 membrane-embedded substrate-binding proteins (S component), 2 ATP-binding proteins (A component) and 2 transmembrane proteins (T component).

It localises to the cell membrane. ATP-binding (A) component of a common energy-coupling factor (ECF) ABC-transporter complex. Unlike classic ABC transporters this ECF transporter provides the energy necessary to transport a number of different substrates. The chain is Energy-coupling factor transporter ATP-binding protein EcfA2 from Lactobacillus acidophilus (strain ATCC 700396 / NCK56 / N2 / NCFM).